The chain runs to 141 residues: Heavy metal-associated isoprenylated plant protein 29 (141 aa).

Residues 1–59 enclose the HMA domain; it reads MEVPMDCPGCENKVRKALEKMNGVHDVQIDIKQQRVTVTGSAEQKKVLKVARNVTKRDI. The a metal cation site is built by Cys7 and Cys10. The residue at position 138 (Cys138) is a Cysteine methyl ester. Residue Cys138 is the site of S-farnesyl cysteine attachment. The propeptide at 139–141 is removed in mature form; it reads SIM.

The protein belongs to the HIPP family.

Functionally, heavy-metal-binding protein. This chain is Heavy metal-associated isoprenylated plant protein 29, found in Arabidopsis thaliana (Mouse-ear cress).